The chain runs to 302 residues: MIKQRTLKNIIRATGVGLHSGEKVYLTLKPAPVDTGVVFCRTDLDPIVEIPARAENVGETLLSTTLVKSGVKIATVEHLLSALAGLGIDNCYVELSAAEVPIMDGSAGPFVFLIQSAGIAEQDAPKKFIRIKREVTVTDEDKRATFVPFDGFKVTFSIDFDHPVIKGRSQETVIDFSSTSFVKEVSRARTFGFMRDIEKLRAMNLALGGSMDNVIVVDDFKILNEDGLRYEDEFVKHKVLDAIGDLYLLGNSLIGEFKGHKSGHGLNNKLLRELLSQKDAWEVVTFEDAGEAPISYLKPVLA.

Residues histidine 78, histidine 237, and aspartate 241 each contribute to the Zn(2+) site. The active-site Proton donor is histidine 264.

It belongs to the LpxC family. Requires Zn(2+) as cofactor.

It carries out the reaction a UDP-3-O-[(3R)-3-hydroxyacyl]-N-acetyl-alpha-D-glucosamine + H2O = a UDP-3-O-[(3R)-3-hydroxyacyl]-alpha-D-glucosamine + acetate. It participates in glycolipid biosynthesis; lipid IV(A) biosynthesis; lipid IV(A) from (3R)-3-hydroxytetradecanoyl-[acyl-carrier-protein] and UDP-N-acetyl-alpha-D-glucosamine: step 2/6. In terms of biological role, catalyzes the hydrolysis of UDP-3-O-myristoyl-N-acetylglucosamine to form UDP-3-O-myristoylglucosamine and acetate, the committed step in lipid A biosynthesis. The sequence is that of UDP-3-O-acyl-N-acetylglucosamine deacetylase from Hahella chejuensis (strain KCTC 2396).